Here is an 864-residue protein sequence, read N- to C-terminus: Leucine--tRNA ligase (864 aa).

The 'HIGH' region signature appears at 42-52; sequence PYPSGKLHMGH. Residues 622 to 626 carry the 'KMSKS' region motif; the sequence is KMSKS. Lys625 is a binding site for ATP.

The protein belongs to the class-I aminoacyl-tRNA synthetase family.

The protein localises to the cytoplasm. It catalyses the reaction tRNA(Leu) + L-leucine + ATP = L-leucyl-tRNA(Leu) + AMP + diphosphate. In Cellvibrio japonicus (strain Ueda107) (Pseudomonas fluorescens subsp. cellulosa), this protein is Leucine--tRNA ligase.